Consider the following 31-residue polypeptide: U13-ctenitoxin-Pn1b (31 aa).

3 cysteine pairs are disulfide-bonded: cysteine 3-cysteine 17, cysteine 10-cysteine 21, and cysteine 16-cysteine 30.

As to expression, expressed by the venom gland.

It localises to the secreted. Its function is as follows. Acts as a neurotoxin. The sequence is that of U13-ctenitoxin-Pn1b from Phoneutria nigriventer (Brazilian armed spider).